Reading from the N-terminus, the 103-residue chain is Co-chaperonin GroES (103 aa).

The protein belongs to the GroES chaperonin family. In terms of assembly, heptamer of 7 subunits arranged in a ring. Interacts with the chaperonin GroEL.

It is found in the cytoplasm. Functionally, together with the chaperonin GroEL, plays an essential role in assisting protein folding. The GroEL-GroES system forms a nano-cage that allows encapsulation of the non-native substrate proteins and provides a physical environment optimized to promote and accelerate protein folding. GroES binds to the apical surface of the GroEL ring, thereby capping the opening of the GroEL channel. This chain is Co-chaperonin GroES, found in Thermosynechococcus vestitus (strain NIES-2133 / IAM M-273 / BP-1).